We begin with the raw amino-acid sequence, 392 residues long: Acetyl-CoA acetyltransferase (392 aa).

C87 acts as the Acyl-thioester intermediate in catalysis. Residues H348 and C378 each act as proton acceptor in the active site.

Belongs to the thiolase-like superfamily. Thiolase family.

Its subcellular location is the cytoplasm. The catalysed reaction is 2 acetyl-CoA = acetoacetyl-CoA + CoA. It participates in metabolic intermediate biosynthesis; (R)-mevalonate biosynthesis; (R)-mevalonate from acetyl-CoA: step 1/3. In terms of biological role, involved in the production of polyhydroxyalkonic acids (PHAs), composed primarily of 3-hydroxybutyric acid (3HB) and 3-hydroxyvaleric acid (3HV). In Chromobacterium violaceum (strain ATCC 12472 / DSM 30191 / JCM 1249 / CCUG 213 / NBRC 12614 / NCIMB 9131 / NCTC 9757 / MK), this protein is Acetyl-CoA acetyltransferase (phaA).